The sequence spans 633 residues: Probable extracellular metalloproteinase 5 (633 aa).

The first 20 residues, 1 to 20 (MHGLLLAAAGLLSLPLHVLA), serve as a signal peptide directing secretion. Residues 21-244 (HPQPSTNLAG…VHNVVDYVSH (224 aa)) constitute a propeptide that is removed on maturation. An N-linked (GlcNAc...) asparagine glycan is attached at Asn-285. His-428 contacts Zn(2+). Residue Glu-429 is part of the active site. His-432 provides a ligand contact to Zn(2+). Residues Asn-592 and Asn-621 are each glycosylated (N-linked (GlcNAc...) asparagine).

It belongs to the peptidase M36 family. Zn(2+) serves as cofactor.

It localises to the secreted. Its function is as follows. Secreted metalloproteinase probably acting as a virulence factor. The polypeptide is Probable extracellular metalloproteinase 5 (MEP5) (Trichophyton verrucosum (strain HKI 0517)).